The sequence spans 162 residues: Globin CTT-VIIB-7 (162 aa).

Positions 1 to 16 (MKFFAVLALCVVGAIA) are cleaved as a signal peptide. The 145-residue stretch at 18–162 (PLSADEANLV…TYAVALKSLE (145 aa)) folds into the Globin domain. Heme b-binding residues include histidine 76 and histidine 111.

It belongs to the globin family. In terms of assembly, homodimer.

The polypeptide is Globin CTT-VIIB-7 (CTT-7B7) (Chironomus thummi piger (Midge)).